The chain runs to 292 residues: E3 ubiquitin-protein ligase RNF144A (292 aa).

The TRIAD supradomain stretch occupies residues 16 to 236; the sequence is PLVSCKLCLG…YDKGPCRNKL (221 aa). 14 residues coordinate Zn(2+): C20, C23, C43, C46, C111, C116, C135, C138, C143, C146, H151, C156, C185, and C188. Residues 20–70 form an RING-type 1 zinc finger; sequence CKLCLGEYPAEQMTTIAQCQCIFCTLCLKQYVELLIKEGLETAISCPDAAC. The IBR-type zinc finger occupies 91-156; it reads QRYKKLQFER…KARWHPGQGC (66 aa). The segment at 185–214 adopts an RING-type 2; atypical zinc-finger fold; that stretch reads CPKCRVYIERDEGCAQMMCKNCKHAFCWYC. The active site involves C198. C203, C206, C211, C214, H226, and C232 together coordinate Zn(2+). A helical transmembrane segment spans residues 250–270; that stretch reads VVGIFAGFGLLLLVASPFLLL.

This sequence belongs to the RBR family. RNF144 subfamily. In terms of assembly, self-associates. Interacts with UBE2L3. Autoubiquitinated.

The protein localises to the cell membrane. It localises to the cytoplasmic vesicle membrane. It carries out the reaction [E2 ubiquitin-conjugating enzyme]-S-ubiquitinyl-L-cysteine + [acceptor protein]-L-lysine = [E2 ubiquitin-conjugating enzyme]-L-cysteine + [acceptor protein]-N(6)-ubiquitinyl-L-lysine.. The protein operates within protein modification; protein ubiquitination. E3 ubiquitin-protein ligase which accepts ubiquitin from E2 ubiquitin-conjugating enzymes UBE2L3 and UBE2L6 in the form of a thioester and then directly transfers the ubiquitin to targeted substrates. Mediates the ubiquitination and degradation of the DNA damage kinase PRKDC during DNA damage. Positively regulates DNA virus or exogenous cytosolic DNA-triggered innate immune response by mediating STING1 ubiquitination and increasing its 'Lys-6'-linked ubiquitination and translocation from the endoplasmic reticulum to the Golgi leading to downstream signaling pathways. Plays a positive role in EGF-dependent cell proliferation by prolonging EGF/EGFR signaling during EGF stimulation through EGFR ubiquitination. Increases ERK activity independently of EGFR signaling by promoting polyubiquitination and subsequent degradation of VRK3 in the cytosol. This Mus musculus (Mouse) protein is E3 ubiquitin-protein ligase RNF144A (Rnf144a).